The sequence spans 304 residues: UDP-3-O-acyl-N-acetylglucosamine deacetylase (304 aa).

Zn(2+) is bound by residues His78, His237, and Asp241. Residue His264 is the Proton donor of the active site.

It belongs to the LpxC family. It depends on Zn(2+) as a cofactor.

The enzyme catalyses a UDP-3-O-[(3R)-3-hydroxyacyl]-N-acetyl-alpha-D-glucosamine + H2O = a UDP-3-O-[(3R)-3-hydroxyacyl]-alpha-D-glucosamine + acetate. Its pathway is glycolipid biosynthesis; lipid IV(A) biosynthesis; lipid IV(A) from (3R)-3-hydroxytetradecanoyl-[acyl-carrier-protein] and UDP-N-acetyl-alpha-D-glucosamine: step 2/6. Catalyzes the hydrolysis of UDP-3-O-myristoyl-N-acetylglucosamine to form UDP-3-O-myristoylglucosamine and acetate, the committed step in lipid A biosynthesis. This is UDP-3-O-acyl-N-acetylglucosamine deacetylase from Marinobacter nauticus (strain ATCC 700491 / DSM 11845 / VT8) (Marinobacter aquaeolei).